Here is a 95-residue protein sequence, read N- to C-terminus: MDPHQIIIRPVISEKSYNLIENEGQYTFEVDRRANKNQIKKAVEEAFDVKVKKVNTVNVKSKPKRQGFTRGRTSTWKKAVVKLAEGDRIELFEGV.

It belongs to the universal ribosomal protein uL23 family. Part of the 50S ribosomal subunit. Contacts protein L29, and trigger factor when it is bound to the ribosome.

One of the early assembly proteins it binds 23S rRNA. One of the proteins that surrounds the polypeptide exit tunnel on the outside of the ribosome. Forms the main docking site for trigger factor binding to the ribosome. This Rubrobacter xylanophilus (strain DSM 9941 / JCM 11954 / NBRC 16129 / PRD-1) protein is Large ribosomal subunit protein uL23.